Here is a 351-residue protein sequence, read N- to C-terminus: Foldase protein PrsA 1 (351 aa).

Residues 1–22 form the signal peptide; it reads MKNSNKLIASVVTLASVMALAA. Cysteine 23 is lipidated: N-palmitoyl cysteine. Cysteine 23 carries S-diacylglycerol cysteine lipidation. A PpiC domain is found at 145-240; the sequence is TPTMAVEMIT…KKFYIVKVTK (96 aa). Low complexity-rich tracts occupy residues 303–317 and 326–351; these read KTKAASESSTTSESS and ESEQTQTSSAEEPTETEAQTQEPAAQ. Residues 303–351 form a disordered region; sequence KTKAASESSTTSESSKAAEENPSESEQTQTSSAEEPTETEAQTQEPAAQ.

The protein belongs to the PrsA family.

It localises to the cell membrane. It catalyses the reaction [protein]-peptidylproline (omega=180) = [protein]-peptidylproline (omega=0). Its function is as follows. Plays a major role in protein secretion by helping the post-translocational extracellular folding of several secreted proteins. The sequence is that of Foldase protein PrsA 1 from Streptococcus pyogenes serotype M6 (strain ATCC BAA-946 / MGAS10394).